The following is a 229-amino-acid chain: 7-cyano-7-deazaguanine synthase (229 aa).

8–18 (FSGGQDSTTCL) lines the ATP pocket. Residues Cys187, Cys196, Cys199, and Cys202 each coordinate Zn(2+).

Belongs to the QueC family. Zn(2+) serves as cofactor.

It carries out the reaction 7-carboxy-7-deazaguanine + NH4(+) + ATP = 7-cyano-7-deazaguanine + ADP + phosphate + H2O + H(+). The protein operates within purine metabolism; 7-cyano-7-deazaguanine biosynthesis. Catalyzes the ATP-dependent conversion of 7-carboxy-7-deazaguanine (CDG) to 7-cyano-7-deazaguanine (preQ(0)). The chain is 7-cyano-7-deazaguanine synthase from Shewanella halifaxensis (strain HAW-EB4).